The chain runs to 142 residues: Multiprotein-bridging factor 1a (142 aa).

Residues 51–64 (GTNKAASSGTSLNT) show a composition bias toward polar residues. The disordered stretch occupies residues 51 to 77 (GTNKAASSGTSLNTKMLDDDTENLTHE). Positions 87 to 141 (IMQARTDKKLTQSQLAQIINEKPQVIQEYESGKAIPNQQILSKLERALGAKLRGK) constitute an HTH cro/C1-type domain. Positions 98-117 (QSQLAQIINEKPQVIQEYES) form a DNA-binding region, H-T-H motif.

This sequence belongs to the MBF1 family. As to expression, expressed in leaves, roots, stems, flowers, siliques and shoots. Detected only in anthers and some seeds in siliques.

The protein resides in the nucleus. It is found in the nucleolus. Functionally, transcriptional coactivator that stimulates transcriptional activity by bridging regulatory proteins and TBP, thereby recruiting TBP to promoters occupied by DNA-binding regulators. This chain is Multiprotein-bridging factor 1a (MBF1A), found in Arabidopsis thaliana (Mouse-ear cress).